The primary structure comprises 213 residues: Dimethylamine corrinoid protein 1 (213 aa).

The 90-residue stretch at 1-90 folds into the B12-binding N-terminal domain; sequence MSKEELLQEL…LMPEGSASSK (90 aa). Positions 91 to 213 constitute a B12-binding domain; that stretch reads MGVIVNGTVE…AVAKAKELLA (123 aa). H104 lines the methylcob(III)alamin pocket.

This sequence belongs to the methylamine corrinoid protein family.

Its pathway is one-carbon metabolism; methanogenesis from dimethylamine. In terms of biological role, acts as a methyl group carrier between MtbB and MtbA. In Methanosarcina acetivorans (strain ATCC 35395 / DSM 2834 / JCM 12185 / C2A), this protein is Dimethylamine corrinoid protein 1 (mtbC1).